Reading from the N-terminus, the 223-residue chain is Small ribosomal subunit protein uS3 (223 aa).

The KH type-2 domain maps to 40 to 108 (IRELVHRELP…KVHLNIQEIR (69 aa)).

Belongs to the universal ribosomal protein uS3 family. Part of the 30S ribosomal subunit. Forms a tight complex with proteins S10 and S14.

Binds the lower part of the 30S subunit head. Binds mRNA in the 70S ribosome, positioning it for translation. This Thermomicrobium roseum (strain ATCC 27502 / DSM 5159 / P-2) protein is Small ribosomal subunit protein uS3.